The following is a 2974-amino-acid chain: Mediator of RNA polymerase II transcription subunit 13 (2974 aa).

4 stretches are compositionally biased toward basic and acidic residues: residues 284-299 (EKEP…KTPE), 340-367 (MFEP…AREV), 374-390 (RREE…RADD), and 624-633 (SREKRKEYQP). Disordered regions lie at residues 284–309 (EKEP…PQTT), 340–394 (MFEP…NLED), 624–654 (SREK…KRKV), 677–749 (FNAW…FADI), 764–801 (LYNP…PKEE), 1032–1063 (PHGS…QDGE), 1099–1134 (GMLS…YPTP), 1140–1159 (LQAD…FRST), 1281–1342 (TLAR…TPTY), 1416–1486 (QGGL…DATA), 2052–2078 (ELKK…ATPA), and 2247–2309 (QDEA…PAGM). Residues 351 to 396 (KEETAAEKEKRMAAREVRRLRRQRREERRREMEKQRRADDNLEDYD) adopt a coiled-coil conformation. 2 stretches are compositionally biased toward basic residues: residues 634–654 (YHRK…KRKV) and 677–688 (FNAWKQKKKGPP). Basic and acidic residues predominate over residues 689–717 (PKKDLAKKEAAADKDKDKDKEKDKEKDKD). A compositionally biased stretch (basic and acidic residues) spans 1035–1048 (SFDHDSEPEFDEQR). Composition is skewed to polar residues over residues 1122-1134 (IESQ…YPTP) and 1140-1149 (LQADASQAHS). Pro residues-rich tracts occupy residues 1284–1299 (RPPP…PTPM) and 1326–1340 (PAYP…PTTP). The span at 1443–1464 (IRNTDAPNDPTVSKLQSAVSRN) shows a compositional bias: polar residues. The segment covering 1473–1486 (AATSIPTATDDATA) has biased composition (low complexity). Residues 2064–2073 (STQSENSEGN) show a composition bias toward polar residues. Residues 2220 to 2301 (AVEGRLKRQK…EQYPAEESQA (82 aa)) adopt a coiled-coil conformation. Composition is skewed to basic and acidic residues over residues 2247–2258 (QDEADKREKMDE) and 2281–2292 (EEKKRNKQKENE). The segment at 2347 to 2974 (WKQRDTRVQN…LYHSVARLLV (628 aa)) is mediates transcriptional repression.

Belongs to the Mediator complex subunit 13 family. Component of the Mediator complex.

It is found in the nucleus. Its function is as follows. Component of the Mediator complex, a coactivator involved in regulated gene transcription of nearly all RNA polymerase II-dependent genes. Mediator functions as a bridge to convey information from gene-specific regulatory proteins to the basal RNA polymerase II transcription machinery. Mediator is recruited to promoters by direct interactions with regulatory proteins and serves as a scaffold for the assembly of a functional preinitiation complex with RNA polymerase II and the general transcription factors. The sequence is that of Mediator of RNA polymerase II transcription subunit 13 (let-19) from Caenorhabditis briggsae.